The primary structure comprises 382 residues: uncharacterized protein (382 aa).

Transmembrane regions (helical) follow at residues 14–34 (GLLL…LWLA), 45–65 (MVSS…GYLI), 79–99 (LVFA…SWMA), 102–122 (FVAG…LMCS), 131–151 (LLAA…LLVS), 157–177 (LMNV…PLLF), 204–224 (LGVN…GLMP), 236–256 (NIGF…WPIG), 265–285 (LLVL…MLTH), 289–309 (APAL…AMAW), 325–345 (ALLL…AMLM), and 349–369 (SDNL…LMLL).

This sequence belongs to the major facilitator superfamily. YcaD (TC 2.A.1.26) family.

Its subcellular location is the cell inner membrane. This is an uncharacterized protein from Escherichia fergusonii (strain ATCC 35469 / DSM 13698 / CCUG 18766 / IAM 14443 / JCM 21226 / LMG 7866 / NBRC 102419 / NCTC 12128 / CDC 0568-73).